A 646-amino-acid polypeptide reads, in one-letter code: Mitochondrial distribution and morphology protein 10 (646 aa).

Disordered stretches follow at residues 206 to 230 (KSTS…SLSN) and 315 to 347 (ETSS…GGGL). Residues 207–230 (STSSSMDRLDSSNPSLSSSTSLSN) are compositionally biased toward low complexity. Positions 315–333 (ETSSSASYPQRNGSVLHTG) are enriched in polar residues.

The protein belongs to the MDM10 family. As to quaternary structure, component of the ER-mitochondria encounter structure (ERMES) or MDM complex, composed of MMM1, MDM10, MDM12 and MDM34. Associates with the mitochondrial outer membrane sorting assembly machinery SAM(core) complex.

The protein localises to the mitochondrion outer membrane. In terms of biological role, component of the ERMES/MDM complex, which serves as a molecular tether to connect the endoplasmic reticulum and mitochondria. Components of this complex are involved in the control of mitochondrial shape and protein biogenesis and may function in phospholipid exchange. MDM10 is involved in the late assembly steps of the general translocase of the mitochondrial outer membrane (TOM complex). Functions in the TOM40-specific route of the assembly of outer membrane beta-barrel proteins, including the association of TOM40 with the receptor TOM22 and small TOM proteins. Can associate with the SAM(core) complex as well as the MDM12-MMM1 complex, both involved in late steps of the major beta-barrel assembly pathway, that is responsible for biogenesis of all outer membrane beta-barrel proteins. May act as a switch that shuttles between both complexes and channels precursor proteins into the TOM40-specific pathway. Plays a role in mitochondrial morphology and in the inheritance of mitochondria. The sequence is that of Mitochondrial distribution and morphology protein 10 from Mycosarcoma maydis (Corn smut fungus).